A 201-amino-acid chain; its full sequence is Recombination protein RecR (201 aa).

The C4-type zinc finger occupies 58-73 (CEQCASITDTCPCRIC). Positions 81 to 178 (DKLCLVSEWD…ELSRLAQGIP (98 aa)) constitute a Toprim domain.

This sequence belongs to the RecR family.

In terms of biological role, may play a role in DNA repair. It seems to be involved in an RecBC-independent recombinational process of DNA repair. It may act with RecF and RecO. The chain is Recombination protein RecR from Maridesulfovibrio salexigens (strain ATCC 14822 / DSM 2638 / NCIMB 8403 / VKM B-1763) (Desulfovibrio salexigens).